The primary structure comprises 131 residues: Ribosome-binding factor A (131 aa).

Belongs to the RbfA family. Monomer. Binds 30S ribosomal subunits, but not 50S ribosomal subunits or 70S ribosomes.

The protein resides in the cytoplasm. In terms of biological role, one of several proteins that assist in the late maturation steps of the functional core of the 30S ribosomal subunit. Associates with free 30S ribosomal subunits (but not with 30S subunits that are part of 70S ribosomes or polysomes). Required for efficient processing of 16S rRNA. May interact with the 5'-terminal helix region of 16S rRNA. This is Ribosome-binding factor A from Vibrio vulnificus (strain CMCP6).